The chain runs to 240 residues: Ribosomal RNA small subunit methyltransferase G (240 aa).

S-adenosyl-L-methionine-binding positions include glycine 79, phenylalanine 84, 130–131 (AE), and arginine 149.

Belongs to the methyltransferase superfamily. RNA methyltransferase RsmG family.

It localises to the cytoplasm. Its function is as follows. Specifically methylates the N7 position of a guanine in 16S rRNA. In Lactobacillus acidophilus (strain ATCC 700396 / NCK56 / N2 / NCFM), this protein is Ribosomal RNA small subunit methyltransferase G.